Reading from the N-terminus, the 405-residue chain is Accessory Sec system protein translocase subunit SecY2 (405 aa).

The next 10 membrane-spanning stretches (helical) occupy residues 14-34, 65-85, 104-124, 131-151, 156-176, 190-210, 243-263, 285-305, 343-363, and 368-388; these read MCTLFLLFIYVLGSRIALPFV, LFSIGLSPWMSAMILWQMFSF, MYLTLGIALIQALALTTNLPV, FLVFLLNTSLLVAGTFFLVWL, ATIGVGGPVVILLASMVASLP, LGLLFLLLVLGVLFTYLVVLF, GMPYMYVMSLMGLPSYLLLLL, PLWIYAYILILFVFSIAFAFV, FALIGAVFNVTLAGVPILFVL, and LLKVSMIPGLFLILSGMLFTI.

The protein belongs to the SecY/SEC61-alpha family. SecY2 subfamily. Component of the accessory SecA2/SecY2 protein translocase complex required to export cell wall proteins. May form heterotrimers with SecE and SecG subunits.

It is found in the cell membrane. Functionally, part of the accessory SecA2/SecY2 system specifically required for export of possible cell wall proteins. The central subunit of a protein translocation channel. This Streptococcus oralis (strain Uo5) protein is Accessory Sec system protein translocase subunit SecY2.